The primary structure comprises 153 residues: Deoxyuridine 5'-triphosphate nucleotidohydrolase (153 aa).

Residues Ser75, Gly88, Asp91, Tyr94, Lys99, Arg143, Phe148, and Gly149 each coordinate dUMP.

The protein belongs to the dUTPase family. In terms of assembly, homotrimer. Mg(2+) is required as a cofactor.

The enzyme catalyses dUTP + H2O = dUMP + diphosphate + H(+). Its pathway is pyrimidine metabolism; dUMP biosynthesis; dUMP from dCTP (dUTP route): step 2/2. In terms of biological role, involved in nucleotide metabolism via production of dUMP, the immediate precursor of thymidine nucleotides, and decreases the intracellular concentration of dUTP so that uracil cannot be incorporated into DNA. The polypeptide is Deoxyuridine 5'-triphosphate nucleotidohydrolase (DUT1) (Eremothecium gossypii (strain ATCC 10895 / CBS 109.51 / FGSC 9923 / NRRL Y-1056) (Yeast)).